The primary structure comprises 606 residues: Phosphoenolpyruvate carboxykinase [GTP] (606 aa).

Residues Arg79 and 218–220 each bind substrate; that span reads YGG. Mn(2+) contacts are provided by Lys227 and His247. Ser269 is a substrate binding site. 270–275 serves as a coordination point for GTP; that stretch reads ACGKTN. Cys271 is an active-site residue. Asp294 is a binding site for Mn(2+). Position 384–386 (384–386) interacts with substrate; sequence NSR. GTP is bound by residues Arg386, Arg417, and 512–515; that span reads FGEN.

It belongs to the phosphoenolpyruvate carboxykinase [GTP] family. In terms of assembly, monomer. Mn(2+) is required as a cofactor.

It is found in the cytoplasm. It catalyses the reaction oxaloacetate + GTP = phosphoenolpyruvate + GDP + CO2. It participates in carbohydrate biosynthesis; gluconeogenesis. Catalyzes the conversion of oxaloacetate (OAA) to phosphoenolpyruvate (PEP), the rate-limiting step in the metabolic pathway that produces glucose from lactate and other precursors derived from the citric acid cycle. The protein is Phosphoenolpyruvate carboxykinase [GTP] of Corynebacterium jeikeium (strain K411).